A 372-amino-acid polypeptide reads, in one-letter code: C-X-C chemokine receptor type 5 (372 aa).

Over 1–55 (MNYPLTLEMDLENLEDLFWELDRLDNYNDTSLVENHLCPATEGPLMASFKAVFVP) the chain is Extracellular. N-linked (GlcNAc...) asparagine glycosylation is present at asparagine 28. Residues 56–76 (VAYSLIFLLGVIGNVLVLVIL) traverse the membrane as a helical segment. Residues 77–88 (ERHRQTRSSTET) lie on the Cytoplasmic side of the membrane. Residues 89 to 109 (FLFHLAVADLLLVFILPFAVA) form a helical membrane-spanning segment. Topologically, residues 110 to 124 (EGSVGWVLGTFLCKT) are extracellular. Residues cysteine 122 and cysteine 202 are joined by a disulfide bond. The helical transmembrane segment at 125-145 (VIALHKVNFYCSSLLLACIAV) threads the bilayer. The Cytoplasmic portion of the chain corresponds to 146–167 (DRYLAIVHAVHAYRHRRLLSIH). A helical membrane pass occupies residues 168–188 (ITCGTIWLVGFLLALPEILFA). Residues 189-219 (KVSQGHHNNSLPRCTFSQENQAETHAWFTSR) lie on the Extracellular side of the membrane. Asparagine 196 carries an N-linked (GlcNAc...) asparagine glycan. A helical transmembrane segment spans residues 220 to 240 (FLYHVAGFLLPMLVMGWCYVG). Residues 241 to 259 (VVHRLRQAQRRPQRQKAVR) are Cytoplasmic-facing. The helical transmembrane segment at 260-280 (VAILVTSIFFLCWSPYHIVIF) threads the bilayer. The Extracellular portion of the chain corresponds to 281–304 (LDTLARLKAVDNTCKLNGSLPVAI). A helical membrane pass occupies residues 305–325 (TMCEFLGLAHCCLNPMLYTFA). Topologically, residues 326-372 (GVKFRSDLSRLLTKLGCTGPASLCQLFPSWRRSSLSESENATSLTTF) are cytoplasmic.

It belongs to the G-protein coupled receptor 1 family. In terms of tissue distribution, expression in mature B-cells and Burkitt lymphoma cells.

It is found in the cell membrane. In terms of biological role, cytokine receptor that binds to B-lymphocyte chemoattractant (BLC). Involved in B-cell migration into B-cell follicles of spleen and Peyer patches but not into those of mesenteric or peripheral lymph nodes. May have a regulatory function in Burkitt lymphoma (BL) lymphomagenesis and/or B-cell differentiation. This Homo sapiens (Human) protein is C-X-C chemokine receptor type 5 (CXCR5).